The primary structure comprises 173 residues: Small ribosomal subunit protein uS9 (173 aa).

A compositionally biased stretch (polar residues) spans 1 to 15 (MTDTPTENLENTEVT). Disordered stretches follow at residues 1-26 (MTDT…EIAY) and 135-173 (EASR…YSKR). Positions 154–173 (KERKKAGLKKARKAPQYSKR) are enriched in basic residues.

Belongs to the universal ribosomal protein uS9 family.

The sequence is that of Small ribosomal subunit protein uS9 from Cutibacterium acnes (strain DSM 16379 / KPA171202) (Propionibacterium acnes).